Here is a 1142-residue protein sequence, read N- to C-terminus: MKEPLLGGECDKAVASQLGLLDEIKTEPDNAQEYCHRQQSRTQENELKINAVFSESASQLTAGIQLSLASSGVNKMLPSVSTTAIQVSCAGCKKILQKGQTAYQRKGSAQLFCSIPCITEYISSASSPVPSKRTCSNCSKDILNPKDVISVQLEDTTSCKTFCSLSCLSSYEEKRKPFVTICTNSILTKCSMCQKTAIIQYEVKYQNVKHNLCSNACLSKFHSANNFIMNCCENCGTYCYTSSSLSHILQMEGQSHYFNSSKSITAYKQKPAKPLISVPCKPLKPSDEMIETTSDLGKTELFCSINCFSAYSKAKMESSSVSVVSVVHDTSTELLSPKKDTTPVISNIVSLADTDVALPIMNTDVLQDTVSSVTATADVIVDLSKSSPSEPSNAVASSSTEQPSVSPSSSVFSQHAIGSSTEVQKDNMKSMKISDELCHPKCTSKVQKVKGKSRSIKKSCCADFECLENSKKDVAFCYSCQLFCQKYFSCGRESFATHGTSNWKKTLEKFRKHEKSEMHLKSLEFWREYQFCDGAVSDDLSIHSKQIEGNKKYLKLIIENILFLGKQCLPLRGNDQSVSSVNKGNFLELLEMRAKDKGEETFRLMNSQVDFYNSTQIQSDIIEIIKTEMLQDIVNEINDSSAFSIICDETINSAMKEQLSICVRYPQKSSKAILIKERFLGFVDTEEMTGTHLHRTIKTYLQQIGVDMDKIHGQAYDSTTNLKIKFNKIAAEFKKEEPRALYIHCYAHFLDLSIIRFCKEVKELRSALKTLSSLFNTICMSGEMLANFRNIYRLSQNKTCKKHISQSCWTVHDRTLLSVIDSLPEIIETLEVIASHSSNTSFADELSHLLTLVSKFEFVFCLKFLYRVLSVTGILSKELQNKTIDIFSLSSKIEAILECLSSERNDVYFKTIWDGTEEICQKITCKGFKVEKPSLQKRRKIQKSVDLGNSDNMFFPTSTEEQYKINIYYQGLDTILQNLKLCFSEFDYCKIKQISELLFKWNEPLNETTAKHVQEFYKLDEDIIPELRFYRHYAKLNFVIDDSCINFVSLGCLFIQHGLHSNIPCLSKLLYIALSWPITSASTENSFSTLPRLKTYLCNTMGQEKLTGPALMAVEQELVNKLMEPERLNEIVEKFISQMKEI.

Lys25 participates in a covalent cross-link: Glycyl lysine isopeptide (Lys-Gly) (interchain with G-Cter in SUMO2). 3 MYM-type zinc fingers span residues 110-148, 160-203, and 210-245; these read QLFC…PKDV, KTFC…QYEV, and HNLC…SSSL. Residue Lys284 forms a Glycyl lysine isopeptide (Lys-Gly) (interchain with G-Cter in SUMO2) linkage. The MYM-type 4 zinc finger occupies 300–331; it reads ELFCSINCFSAYSKAKMESSSVSVVSVVHDTS. Residues 385–396 show a composition bias toward polar residues; sequence KSSPSEPSNAVA. The disordered stretch occupies residues 385–413; sequence KSSPSEPSNAVASSSTEQPSVSPSSSVFS. Positions 397–413 are enriched in low complexity; it reads SSSTEQPSVSPSSSVFS. The segment at 452–538 adopts a TTF-type zinc-finger fold; the sequence is KSRSIKKSCC…YQFCDGAVSD (87 aa).

The protein resides in the nucleus. This is Zinc finger MYM-type protein 1 (ZMYM1) from Homo sapiens (Human).